The sequence spans 80 residues: MTNTKTLEENISFESALKELEEIVKKIDNGQESLEMAVNSFERGILLKNHCEKKLKEARLKIEKITKLADSTVVLEETEV.

Belongs to the XseB family. In terms of assembly, heterooligomer composed of large and small subunits.

Its subcellular location is the cytoplasm. The enzyme catalyses Exonucleolytic cleavage in either 5'- to 3'- or 3'- to 5'-direction to yield nucleoside 5'-phosphates.. Its function is as follows. Bidirectionally degrades single-stranded DNA into large acid-insoluble oligonucleotides, which are then degraded further into small acid-soluble oligonucleotides. The chain is Exodeoxyribonuclease 7 small subunit from Rickettsia akari (strain Hartford).